A 350-amino-acid polypeptide reads, in one-letter code: Dihydroorotate dehydrogenase (quinone) (350 aa).

FMN contacts are provided by residues 67-71 and glycine 91; that span reads AGFDK. Lysine 71 is a substrate binding site. 116 to 120 contacts substrate; it reads NRMGL. Residues asparagine 144 and asparagine 177 each coordinate FMN. Position 177 (asparagine 177) interacts with substrate. Cysteine 180 serves as the catalytic Nucleophile. Asparagine 182 is a substrate binding site. 2 residues coordinate FMN: lysine 213 and threonine 241. Residue 242 to 243 participates in substrate binding; it reads NT. The disordered stretch occupies residues 245–265; it reads TERPASLRSPNAVETGGLSGK. Residues glycine 264, glycine 291, and 312–313 each bind FMN; that span reads YT.

The protein belongs to the dihydroorotate dehydrogenase family. Type 2 subfamily. Monomer. FMN serves as cofactor.

It is found in the cell membrane. It catalyses the reaction (S)-dihydroorotate + a quinone = orotate + a quinol. It participates in pyrimidine metabolism; UMP biosynthesis via de novo pathway; orotate from (S)-dihydroorotate (quinone route): step 1/1. Its function is as follows. Catalyzes the conversion of dihydroorotate to orotate with quinone as electron acceptor. The sequence is that of Dihydroorotate dehydrogenase (quinone) (pyrD) from Haloarcula marismortui (strain ATCC 43049 / DSM 3752 / JCM 8966 / VKM B-1809) (Halobacterium marismortui).